Consider the following 872-residue polypeptide: MAYFQDRKTSSRSLPSYINHSTQNLVGPRKDETNLSEYMKLRLLQSPSQVIYNLENTVSLYRRCLNLRKRLMDISELAAFFDSIHREALNSSFKILEFKDIEFDDPVTEIWLFCRLGYPLCALFNCLPVKQKLEVNSSVSLENTNVCKASLYRFMLMCKNELGLTDAALFSISEIYKPSTAPLVRALQTIELLLKKYEVSNTTKSSSTPSPSTDDNVPTGTLNSLIASGRRVTAELYETELKYIQDLEYLSNYMVILQQKQILSQDTILSIFTNLNEILDFQRRFLVGLEMNLSLPVEEQRLGALFIALEEGFSVYQVFCTNFPNAQQLIIDNQNQLLKVANLLEPSYELPALLIKPIQRICKYPLLLNQLLKGTPSGYQYEEELKQGMACVVRVANQVNETRRIHENRNAIIELEQRVIDWKGYSLQYFGQLLVWDVVNVCKADIEREYHVYLFEKILLCCKEMSTLKRQARSISMNKKTKRLDSLQLKGRILTSNITTVVPNHHMGSYAIQIFWRGDPQHESFILKLRNEESHKLWMSVLNRLLWKNEHGSPKDIRSAASTPANPVYNRSSSQTSKGYNSSDYDLLRTHSLDENVNSPTSISSPSSKSSPFTKTTSKDTKSATTTDERPSDFIRLNSEESVGTSSLRTSQTTSTIVSNDSSSTASIPSQISRISQVNSLLNDYNYNRQSHITRVYSGTDDGSSVSIFEDTSSSTKQKIFDQPTTNDCDVMRPRQYSYSAGMKSDGSLLPSTKHTSLSSSSTSTSLSVRNTTNVKIRLRLHEVSLVLVVAHDITFDELLAKVEHKIKLCGILKQAVPFRVRLKYVDEDGDFITITSDEDVLMAFETCTFELMDPVHNKGMDTVSLHVVVYF.

The disordered stretch occupies residues 1 to 29 (MAYFQDRKTSSRSLPSYINHSTQNLVGPR). The segment covering 11–25 (SRSLPSYINHSTQNL) has biased composition (polar residues). The Calponin-homology (CH) domain occupies 82–198 (DSIHREALNS…TIELLLKKYE (117 aa)). A DH domain is found at 228 to 402 (SGRRVTAELY…VRVANQVNET (175 aa)). Residues 426 to 547 (SLQYFGQLLV…WMSVLNRLLW (122 aa)) enclose the PH domain. Disordered regions lie at residues 553–667 (SPKD…STAS) and 743–765 (MKSD…STST). The segment covering 560-584 (AASTPANPVYNRSSSQTSKGYNSSD) has biased composition (polar residues). S583 carries the phosphoserine modification. The span at 599–616 (SPTSISSPSSKSSPFTKT) shows a compositional bias: low complexity. Residues 617 to 633 (TSKDTKSATTTDERPSD) are compositionally biased toward basic and acidic residues. Low complexity-rich tracts occupy residues 645-667 (TSSL…STAS) and 748-765 (SLLP…STST). One can recognise a PB1 domain in the interval 772-859 (TTNVKIRLRL…FELMDPVHNK (88 aa)).

Scd1, scd2, cdc42, and ras1, in its GTP-bound state, act cooperatively to form a protein complex. Interacts with moe1 and cdc42.

Its subcellular location is the nucleus. The protein resides in the cytoplasm. Its function is as follows. Required for mating and morphogenesis. May contain a cryptic binding site for cdc42 that is enhanced by binding Ras. Interacts directly with scd2. Promotes the exchange of cdc42-bound GDP by GTP. Involved in septation and stimulates the elongation of conjugation tubes. The protein is Rho guanine nucleotide exchange factor scd1 (scd1) of Schizosaccharomyces pombe (strain 972 / ATCC 24843) (Fission yeast).